The primary structure comprises 804 residues: Protein translocase subunit SecA (804 aa).

Residues Gln-100, 118-122 (GEGKT), and Asp-508 each bind ATP.

This sequence belongs to the SecA family. Monomer and homodimer. Part of the essential Sec protein translocation apparatus which comprises SecA, SecYEG and auxiliary proteins SecDF. Other proteins may also be involved.

The protein localises to the cell membrane. The protein resides in the cytoplasm. It catalyses the reaction ATP + H2O + cellular proteinSide 1 = ADP + phosphate + cellular proteinSide 2.. Part of the Sec protein translocase complex. Interacts with the SecYEG preprotein conducting channel. Has a central role in coupling the hydrolysis of ATP to the transfer of proteins into and across the cell membrane, serving as an ATP-driven molecular motor driving the stepwise translocation of polypeptide chains across the membrane. The sequence is that of Protein translocase subunit SecA from Leuconostoc citreum (strain KM20).